Here is a 373-residue protein sequence, read N- to C-terminus: Type II secretion system protein L (373 aa).

The Cytoplasmic portion of the chain corresponds to 1-214 (MTAWRDTLGR…RRSDPMQRWN (214 aa)). Residues 215–233 (LLLAVAALVLLAVAGWLLL) traverse the membrane as a helical segment. The Periplasmic segment spans residues 234–373 (DNRRQAADDL…AKEAADAAQR (140 aa)).

Belongs to the GSP L family. In terms of assembly, type II secretion system is composed of four main components: the outer membrane complex, the inner membrane complex, the cytoplasmic secretion ATPase and the periplasm-spanning pseudopilus. Forms homodimers. Interacts with XpsM/GspM. Interacts with XpsE/GspE and XpsF/GspF.

It is found in the cell inner membrane. In terms of biological role, inner membrane component of the type II secretion system required for the energy-dependent secretion of extracellular factors such as proteases and toxins from the periplasm. Plays a role in the complex assembly and recruits XpsM resulting in a stable complex in the inner membrane. Provides thus a link between the energy-providing XpsE protein in the cytoplasm and the rest of the T2SS machinery. The chain is Type II secretion system protein L (pefL) from Xanthomonas campestris pv. campestris (strain ATCC 33913 / DSM 3586 / NCPPB 528 / LMG 568 / P 25).